Reading from the N-terminus, the 548-residue chain is Phenylalanine--tRNA ligase beta subunit (548 aa).

Residues 271–346 (LSEAAAKLDP…ISIGYEALGP (76 aa)) enclose the B5 domain. Aspartate 324, aspartate 330, glutamate 333, and aspartate 334 together coordinate Mg(2+).

Belongs to the phenylalanyl-tRNA synthetase beta subunit family. Type 2 subfamily. Tetramer of two alpha and two beta subunits. Mg(2+) is required as a cofactor.

It localises to the cytoplasm. The catalysed reaction is tRNA(Phe) + L-phenylalanine + ATP = L-phenylalanyl-tRNA(Phe) + AMP + diphosphate + H(+). The polypeptide is Phenylalanine--tRNA ligase beta subunit (Aeropyrum pernix (strain ATCC 700893 / DSM 11879 / JCM 9820 / NBRC 100138 / K1)).